The primary structure comprises 615 residues: Chaperone protein DnaK (615 aa).

Threonine 175 carries the post-translational modification Phosphothreonine; by autocatalysis. The disordered stretch occupies residues 573–615; it reads SQEMYQKAAQEQQAAQGAEQAQDNGPKDDNVVDADFKEVDEDK. The span at 580-594 shows a compositional bias: low complexity; it reads AAQEQQAAQGAEQAQ. The span at 597–609 shows a compositional bias: basic and acidic residues; it reads GPKDDNVVDADFK.

This sequence belongs to the heat shock protein 70 family.

Functionally, acts as a chaperone. In Clostridioides difficile (strain 630) (Peptoclostridium difficile), this protein is Chaperone protein DnaK.